The chain runs to 668 residues: Exoribonuclease 2 (668 aa).

One can recognise an RNB domain in the interval Arg-193–Ile-521. The S1 motif domain occupies Gln-568–Thr-650.

The protein belongs to the RNR ribonuclease family. RNase II subfamily.

It is found in the cytoplasm. It carries out the reaction Exonucleolytic cleavage in the 3'- to 5'-direction to yield nucleoside 5'-phosphates.. In terms of biological role, involved in mRNA degradation. Hydrolyzes single-stranded polyribonucleotides processively in the 3' to 5' direction. The protein is Exoribonuclease 2 of Vibrio parahaemolyticus serotype O3:K6 (strain RIMD 2210633).